Here is a 477-residue protein sequence, read N- to C-terminus: S-triazine hydrolase (477 aa).

2 stretches are compositionally biased toward low complexity: residues 38–73 (SPTTSTSAAPKSSTPPGWQCSPASSTPTPTSHKSSS) and 120–132 (PLSSTTRTSDPTT). Disordered regions lie at residues 38-77 (SPTTSTSAAPKSSTPPGWQCSPASSTPTPTSHKSSSGVVH) and 120-143 (PLSSTTRTSDPTTSPAPGPPGSPF).

The protein belongs to the metallo-dependent hydrolases superfamily. ATZ/TRZ family.

It participates in xenobiotic degradation; melamine degradation. Functionally, hydrolytic deamination of the S-triazine substrate melamine. This chain is S-triazine hydrolase (trzA), found in Gordonia rubripertincta (Rhodococcus corallinus).